Consider the following 102-residue polypeptide: Large ribosomal subunit protein bL21 (102 aa).

This sequence belongs to the bacterial ribosomal protein bL21 family. In terms of assembly, part of the 50S ribosomal subunit. Contacts protein L20.

Functionally, this protein binds to 23S rRNA in the presence of protein L20. The protein is Large ribosomal subunit protein bL21 of Cytophaga hutchinsonii (strain ATCC 33406 / DSM 1761 / CIP 103989 / NBRC 15051 / NCIMB 9469 / D465).